Reading from the N-terminus, the 458-residue chain is tRNA modification GTPase MnmE (458 aa).

(6S)-5-formyl-5,6,7,8-tetrahydrofolate contacts are provided by Arg26, Glu88, and Arg127. In terms of domain architecture, TrmE-type G spans 224-378 (GLSTAIIGRP…IEDRINQLFF (155 aa)). A K(+)-binding site is contributed by Asn234. Residues 234–239 (NVGKSS), 253–259 (TDIAGTT), and 278–281 (DTAG) each bind GTP. Residue Ser238 participates in Mg(2+) binding. Positions 253, 255, and 258 each coordinate K(+). Thr259 provides a ligand contact to Mg(2+). Lys458 is a (6S)-5-formyl-5,6,7,8-tetrahydrofolate binding site.

It belongs to the TRAFAC class TrmE-Era-EngA-EngB-Septin-like GTPase superfamily. TrmE GTPase family. In terms of assembly, homodimer. Heterotetramer of two MnmE and two MnmG subunits. Requires K(+) as cofactor.

The protein localises to the cytoplasm. Its function is as follows. Exhibits a very high intrinsic GTPase hydrolysis rate. Involved in the addition of a carboxymethylaminomethyl (cmnm) group at the wobble position (U34) of certain tRNAs, forming tRNA-cmnm(5)s(2)U34. The sequence is that of tRNA modification GTPase MnmE from Streptococcus pyogenes serotype M3 (strain ATCC BAA-595 / MGAS315).